Here is a 490-residue protein sequence, read N- to C-terminus: MGFDSVKVMENWQSKTSNENEKKKKKRRRKKNNNVRNSEHYEEEANGCWVKFRYIVCCASSTSDVETSLTLSTSTVGSQSAIVQSNDQPVGPVSSTTTTSNAESSLSTPIISEELNIYSHLKKFSFIDLKLATRNFRPESLLGEGGFGCVFKGWVEENGTAPVKPGTGLTVAVKTLNPDGLQGHKEWLAEINYLGNLLHPNLVKLVGYCIEDDQRLLVYEFMPRGSLENHLFRRSLPLPWSIRMKIALGAAKGLSFLHEEALKPVIYRDFKTSNILLDGEYNAKLSDFGLAKDAPDEGKTHVSTRVMGTYGYAAPEYVMTGHLTSKSDVYSFGVVLLEMLTGRRSMDKNRPNGEHNLVEWARPHLLDKRRFYRLLDPRLEGHFSVKGAQKVTQLAAQCLSRDSKIRPKMSEVVEVLKPLPHLKDMASASYYFQTMQAERLKAGSGSGSGRGFGSRNGQPVFRTLSSPHGQAGSSPYRHQIPSPKPKGATT.

2 disordered regions span residues 1–39 (MGFD…RNSE) and 80–103 (SAIV…SNAE). Residues 14–39 (SKTSNENEKKKKKRRRKKNNNVRNSE) adopt a coiled-coil conformation. Positions 23–33 (KKKKRRRKKNN) are enriched in basic residues. A compositionally biased stretch (low complexity) spans 94–103 (SSTTTTSNAE). The 287-residue stretch at 136–422 (FRPESLLGEG…VEVLKPLPHL (287 aa)) folds into the Protein kinase domain. Residues 142 to 150 (LGEGGFGCV) and lysine 174 contribute to the ATP site. Tyrosine 219 carries the phosphotyrosine modification. The active-site Proton acceptor is aspartate 269. Phosphoserine is present on residues serine 273 and serine 303. Threonine 304 and threonine 309 each carry phosphothreonine. At tyrosine 317 the chain carries Phosphotyrosine. The disordered stretch occupies residues 442–490 (AGSGSGSGRGFGSRNGQPVFRTLSSPHGQAGSSPYRHQIPSPKPKGATT). Over residues 444–454 (SGSGSGRGFGS) the composition is skewed to gly residues. Polar residues predominate over residues 463–473 (TLSSPHGQAGS).

This sequence belongs to the protein kinase superfamily. Ser/Thr protein kinase family. As to quaternary structure, interacts with SD129. Post-translationally, phosphorylated by SD129 in response to the pathogen-associated molecular pattern (PAMP) 3-OH-C10:0, a medium-chain 3-hydroxy fatty acid.

The protein localises to the cell membrane. The enzyme catalyses L-seryl-[protein] + ATP = O-phospho-L-seryl-[protein] + ADP + H(+). It carries out the reaction L-threonyl-[protein] + ATP = O-phospho-L-threonyl-[protein] + ADP + H(+). Functionally, involved in chitin-triggered immune signaling and is required for reactive oxygen species (ROS) production. Acts downstream of SD129 in defense signaling triggered by the pathogen-associated molecular pattern (PAMP) 3-OH-C10:0, a medium-chain 3-hydroxy fatty acid. In Arabidopsis thaliana (Mouse-ear cress), this protein is Serine/threonine-protein kinase PBL35.